A 498-amino-acid polypeptide reads, in one-letter code: Guanosine-5'-triphosphate,3'-diphosphate pyrophosphatase (498 aa).

The protein belongs to the GppA/Ppx family. GppA subfamily.

The catalysed reaction is guanosine 3'-diphosphate 5'-triphosphate + H2O = guanosine 3',5'-bis(diphosphate) + phosphate + H(+). It functions in the pathway purine metabolism; ppGpp biosynthesis; ppGpp from GTP: step 2/2. Its function is as follows. Catalyzes the conversion of pppGpp to ppGpp. Guanosine pentaphosphate (pppGpp) is a cytoplasmic signaling molecule which together with ppGpp controls the 'stringent response', an adaptive process that allows bacteria to respond to amino acid starvation, resulting in the coordinated regulation of numerous cellular activities. This chain is Guanosine-5'-triphosphate,3'-diphosphate pyrophosphatase, found in Yersinia pseudotuberculosis serotype O:1b (strain IP 31758).